The following is an 892-amino-acid chain: Translation initiation factor IF-2 (892 aa).

The segment at 88–305 (KKRTFVKRDP…SLQQGFQKPA (218 aa)) is disordered. Basic and acidic residues-rich tracts occupy residues 93-159 (VKRD…KDKV) and 166-216 (DMTK…EENK). The segment covering 254-269 (GRGRNAKAARPAKKGK) has biased composition (basic residues). A compositionally biased stretch (basic and acidic residues) spans 270–282 (HAESKADREEARA). Residues 391–560 (PRAPVVTIMG…LLQAEVLELK (170 aa)) enclose the tr-type G domain. A G1 region spans residues 400–407 (GHVDHGKT). 400–407 (GHVDHGKT) lines the GTP pocket. The tract at residues 425–429 (GITQH) is G2. The tract at residues 446–449 (DTPG) is G3. GTP is bound by residues 446 to 450 (DTPGH) and 500 to 503 (NKID). Positions 500 to 503 (NKID) are G4. Residues 536–538 (SAK) are G5.

The protein belongs to the TRAFAC class translation factor GTPase superfamily. Classic translation factor GTPase family. IF-2 subfamily.

Its subcellular location is the cytoplasm. In terms of biological role, one of the essential components for the initiation of protein synthesis. Protects formylmethionyl-tRNA from spontaneous hydrolysis and promotes its binding to the 30S ribosomal subunits. Also involved in the hydrolysis of GTP during the formation of the 70S ribosomal complex. The chain is Translation initiation factor IF-2 from Salmonella agona (strain SL483).